The primary structure comprises 312 residues: Apolipoprotein E (312 aa).

The first 18 residues, 1-18, serve as a signal peptide directing secretion; that stretch reads MKALWAVLLVTLLAGCLA. 8 tandem repeats follow at residues 72 to 93, 94 to 115, 116 to 137, 138 to 159, 160 to 181, 182 to 203, 204 to 225, and 226 to 247. The 8 X 22 AA approximate tandem repeats stretch occupies residues 72–247; sequence VLMEDTMTEV…RLEEVREHME (176 aa). M135 is subject to Methionine sulfoxide. S139 is subject to Phosphoserine. Positions 150 to 160 are LDL and other lipoprotein receptors binding; the sequence is HLRKMRKRLMR. A heparin-binding site is contributed by 154 to 157; that stretch reads MRKR. Positions 202–282 are lipid-binding and lipoprotein association; the sequence is TANLGAGAAQ…GWFEPIVEDM (81 aa). A heparin-binding site is contributed by 221 to 228; the sequence is GDRIRGRL. Positions 258 to 312 are homooligomerization; the sequence is QQIRLQAEIFQARLKGWFEPIVEDMHRQWANLMEKIQASVATNPIISTPMPQENQ. Residues 270-282 form a specificity for association with VLDL region; that stretch reads RLKGWFEPIVEDM.

Belongs to the apolipoprotein A1/A4/E family. In terms of assembly, homotetramer. May interact with ABCA1; functionally associated with ABCA1 in the biogenesis of HDLs. May interact with APP/A4 amyloid-beta peptide; the interaction is extremely stable in vitro but its physiological significance is unclear. May interact with MAPT. May interact with MAP2. In the cerebrospinal fluid, interacts with secreted SORL1. Interacts with PMEL; this allows the loading of PMEL luminal fragment on ILVs to induce fibril nucleation. In terms of processing, APOE exists as multiple glycosylated and sialylated glycoforms within cells and in plasma. The extent of glycosylation and sialylation are tissue and context specific. Post-translationally, glycated in plasma VLDL. Phosphorylated by FAM20C in the extracellular medium.

It localises to the secreted. It is found in the extracellular space. The protein resides in the extracellular matrix. Its subcellular location is the extracellular vesicle. The protein localises to the endosome. It localises to the multivesicular body. APOE is an apolipoprotein, a protein associating with lipid particles, that mainly functions in lipoprotein-mediated lipid transport between organs via the plasma and interstitial fluids. APOE is a core component of plasma lipoproteins and is involved in their production, conversion and clearance. Apolipoproteins are amphipathic molecules that interact both with lipids of the lipoprotein particle core and the aqueous environment of the plasma. As such, APOE associates with chylomicrons, chylomicron remnants, very low density lipoproteins (VLDL) and intermediate density lipoproteins (IDL) but shows a preferential binding to high-density lipoproteins (HDL). It also binds a wide range of cellular receptors including the LDL receptor/LDLR, the LDL receptor-related proteins LRP1, LRP2 and LRP8 and the very low-density lipoprotein receptor/VLDLR that mediate the cellular uptake of the APOE-containing lipoprotein particles. Finally, APOE also has a heparin-binding activity and binds heparan-sulfate proteoglycans on the surface of cells, a property that supports the capture and the receptor-mediated uptake of APOE-containing lipoproteins by cells. A main function of APOE is to mediate lipoprotein clearance through the uptake of chylomicrons, VLDLs, and HDLs by hepatocytes. APOE is also involved in the biosynthesis by the liver of VLDLs as well as their uptake by peripheral tissues ensuring the delivery of triglycerides and energy storage in muscle, heart and adipose tissues. By participating in the lipoprotein-mediated distribution of lipids among tissues, APOE plays a critical role in plasma and tissues lipid homeostasis. APOE is also involved in two steps of reverse cholesterol transport, the HDLs-mediated transport of cholesterol from peripheral tissues to the liver, and thereby plays an important role in cholesterol homeostasis. First, it is functionally associated with ABCA1 in the biogenesis of HDLs in tissues. Second, it is enriched in circulating HDLs and mediates their uptake by hepatocytes. APOE also plays an important role in lipid transport in the central nervous system, regulating neuron survival and sprouting. The sequence is that of Apolipoprotein E (Apoe) from Mus pahari (Gairdner's shrew-mouse).